A 990-amino-acid chain; its full sequence is Tyrosine-protein phosphatase 3 (990 aa).

Disordered stretches follow at residues 47–88 (QSQS…SPSV), 100–193 (NKIN…SNIE), 246–414 (PNQQ…SFSQ), and 431–452 (KPEM…HNDL). 2 stretches are compositionally biased toward low complexity: residues 52–88 (NTNT…SPSV) and 100–117 (NKIN…NNNN). Over residues 127-136 (LKLSNTMIIK) the composition is skewed to polar residues. Low complexity-rich tracts occupy residues 137 to 191 (NNNN…SNSN), 250 to 271 (SSSS…SSLL), 278 to 293 (NNST…NSSN), 310 to 327 (QAQV…QHQQ), and 334 to 413 (NLSS…TSFS). Residues 422 to 715 (MRLEFEMIKK…IFIFKVINDV (294 aa)) form the Tyrosine-protein phosphatase domain. The segment covering 437–447 (KKSHKHHQRHY) has biased composition (basic residues). The active-site Phosphocysteine intermediate is cysteine 650. The segment covering 786-795 (PPQQQQDNPF) has biased composition (polar residues). Disordered regions lie at residues 786 to 814 (PPQQ…NISI) and 834 to 990 (LQQQ…IKCF). Low complexity-rich tracts occupy residues 796-806 (SKSSIKISPSP) and 834-850 (LQQQ…DNPP). Polar residues predominate over residues 851 to 868 (LNMSSNSIKFPPVTSLSS). Low complexity-rich tracts occupy residues 878-916 (NDNN…DNNG) and 924-968 (GSFL…SDNN).

It belongs to the protein-tyrosine phosphatase family. Non-receptor class subfamily. As to expression, in the anterior-like and prestalk cell types.

It localises to the cytoplasm. The catalysed reaction is O-phospho-L-tyrosyl-[protein] + H2O = L-tyrosyl-[protein] + phosphate. Functionally, seems to dephosphorylate a protein of 130 kDa (p130). In Dictyostelium discoideum (Social amoeba), this protein is Tyrosine-protein phosphatase 3 (ptpC).